A 752-amino-acid chain; its full sequence is Coiled-coil domain-containing protein 157 (752 aa).

Over residues 135 to 154 (QQPLPQKGANQRETPTSKPT) the composition is skewed to polar residues. Disordered stretches follow at residues 135-163 (QQPLPQKGANQRETPTSKPTTKGEPARSP) and 316-336 (QALKQEQGARRRQAEEDEQCL). 2 coiled-coil regions span residues 276–544 (AAEQ…LLVA) and 579–615 (DHMERQVQSNDIRIRVLQEENGRLQSMLSKIREVAQQ). Over residues 316–329 (QALKQEQGARRRQA) the composition is skewed to basic and acidic residues. 2 disordered regions span residues 620–707 (LIPQ…QPSK) and 731–752 (RKRLSPGRGQASSAHQPQERPM). Positions 628–648 (SPSSKGTQGATPPVQAKSTSP) are enriched in polar residues. The span at 671–692 (TSPPRQPCTSPPRQPCTSPPRQ) shows a compositional bias: pro residues. The span at 693–707 (PCTSPSRQPCSQPSK) shows a compositional bias: polar residues.

This Homo sapiens (Human) protein is Coiled-coil domain-containing protein 157 (CCDC157).